The primary structure comprises 318 residues: L-lactate dehydrogenase (318 aa).

Residues Val-16, Asp-37, and Tyr-69 each contribute to the NAD(+) site. Residues Gln-86, Arg-92, and 124 to 127 each bind substrate; that span reads NPVD. NAD(+) is bound by residues 122-124 and Ser-147; that span reads ASN. Substrate is bound at residue 152 to 155; it reads DSAR. His-179 acts as the Proton acceptor in catalysis. Tyr-223 is modified (phosphotyrosine). Thr-232 contacts substrate.

It belongs to the LDH/MDH superfamily. LDH family. As to quaternary structure, homotetramer.

The protein localises to the cytoplasm. It carries out the reaction (S)-lactate + NAD(+) = pyruvate + NADH + H(+). It functions in the pathway fermentation; pyruvate fermentation to lactate; (S)-lactate from pyruvate: step 1/1. Its function is as follows. Catalyzes the conversion of lactate to pyruvate. This chain is L-lactate dehydrogenase, found in Mycoplasma mycoides subsp. mycoides SC (strain CCUG 32753 / NCTC 10114 / PG1).